The following is a 290-amino-acid chain: MIPRVTSTAQTDLTEGADPYGICAADDGALWVTLVHSGAVVRLSADGGRRDYPIGAQARPSVVTVGRDGTAWFTRTGDDRITALDRTGAMTTFELASGSGPFGICVGADGAVWFTESTGDRLGRIDPDATVSYVALPEGCFPAFVAAGADGAVWATLNHADAVVRILPSADPEVIDIPTPGAAPVGITWGGDAVWFVEIATGRIGRIGDDRLVTEFALPDPACRPHAITAGPDGCWFTEWATDRVGHIGRDGTVEEYDLPSSVSEPHGITVAPDGAVWVAAESGSVVRLG.

Residue histidine 226 coordinates substrate. Glutamate 265 contributes to the Mg(2+) binding site. Catalysis depends on histidine 267, which acts as the Proton acceptor. Position 282 (glutamate 282) interacts with Mg(2+).

Belongs to the Vgb family. In terms of assembly, monomer. It depends on Mg(2+) as a cofactor.

Inactivates the type B streptogramin antibiotics by linearizing the lactone ring at the ester linkage, generating a free phenylglycine carboxylate and converting the threonyl moiety into 2-amino-butenoic acid. This Mycolicibacterium vanbaalenii (strain DSM 7251 / JCM 13017 / BCRC 16820 / KCTC 9966 / NRRL B-24157 / PYR-1) (Mycobacterium vanbaalenii) protein is Virginiamycin B lyase.